The chain runs to 475 residues: Putative aldehyde dehydrogenase SERP1729 (475 aa).

201 to 207 (GDGSGVG) is a binding site for NAD(+). Residues Glu245 and Cys279 contribute to the active site.

It belongs to the aldehyde dehydrogenase family.

The catalysed reaction is an aldehyde + NAD(+) + H2O = a carboxylate + NADH + 2 H(+). The chain is Putative aldehyde dehydrogenase SERP1729 from Staphylococcus epidermidis (strain ATCC 35984 / DSM 28319 / BCRC 17069 / CCUG 31568 / BM 3577 / RP62A).